A 232-amino-acid chain; its full sequence is Vacuolar iron transporter homolog 1 (232 aa).

Over 1–59 (MAIDLGCHVGCASPETKQEETADPTAAPVVVDDVEAAAGGRRPGDGGGVNYVARAQWLR) the chain is Cytoplasmic. The chain crosses the membrane as a helical span at residues 60-80 (AAVLGANDGLVSVASLMVGVG). Over 81 to 89 (AANGTRRAM) the chain is Vacuolar. The helical transmembrane segment at 90–110 (LVSGLAGLVAGACSMAIGEFV) threads the bilayer. At 111–148 (SVYAQCDIQAAQIERARGGKDADGGEEEEELPSPTMAA) the chain is on the cytoplasmic side. A helical membrane pass occupies residues 149 to 169 (VASALSFAAGAALPLLAGGFV). Topologically, residues 170-175 (RPWAAR) are vacuolar. The chain crosses the membrane as a helical span at residues 176–196 (VAAVCAASSLGLAGFGVASAY). Topologically, residues 197 to 208 (LGGAGVARSGVR) are cytoplasmic. A helical transmembrane segment spans residues 209-229 (MLVGGWLAMAVTYGVLKLFGM). The Vacuolar portion of the chain corresponds to 230–232 (HGV).

Belongs to the CCC1 family.

Its subcellular location is the vacuole membrane. The catalysed reaction is Fe(2+)(in) = Fe(2+)(out). Functionally, probable vacuolar iron transporter that may be involved in the regulation of iron distribution throughout the plant. The sequence is that of Vacuolar iron transporter homolog 1 from Oryza sativa subsp. japonica (Rice).